The primary structure comprises 219 residues: Small ribosomal subunit protein uS4 (219 aa).

The S4 RNA-binding domain occupies 112-174; that stretch reads RRLQTQVLRL…GSSPLMSESH (63 aa). Positions 193 to 219 are disordered; the sequence is KAAAEAKQARERPPERGGGRKKRGGRR. Residues 199-210 are compositionally biased toward basic and acidic residues; it reads KQARERPPERGG.

The protein belongs to the universal ribosomal protein uS4 family. As to quaternary structure, part of the 30S ribosomal subunit. Contacts protein S5. The interaction surface between S4 and S5 is involved in control of translational fidelity.

Functionally, one of the primary rRNA binding proteins, it binds directly to 16S rRNA where it nucleates assembly of the body of the 30S subunit. Its function is as follows. With S5 and S12 plays an important role in translational accuracy. The polypeptide is Small ribosomal subunit protein uS4 (Methanosarcina mazei (strain ATCC BAA-159 / DSM 3647 / Goe1 / Go1 / JCM 11833 / OCM 88) (Methanosarcina frisia)).